Consider the following 330-residue polypeptide: PDZ and LIM domain protein 4 (330 aa).

The 84-residue stretch at 1-84 (MPHSVTLRGP…HLTLSVSRPE (84 aa)) folds into the PDZ domain. The segment at 104–180 (IDPEIQDGSP…DPARGLPRSR (77 aa)) is disordered. Low complexity predominate over residues 111 to 121 (GSPTTSRRPSG). Phosphoserine occurs at positions 112, 116, 120, and 135. Positions 148–163 (NGSSEATLPAQMSTLH) are enriched in polar residues. Positions 253–312 (PECTRCGHGIVGTIVKARDKLYHPECFMCSDCGLNLKQRGYFFLDERLYCESHAKARVKP) constitute an LIM zinc-binding domain.

In terms of assembly, homodimer. Interacts with PTPN13. Interacts (via C-terminus only or via combined C-terminus and LIM domain, but not LIM domain only) with PTPN13 (via the second or fourth PDZ domains). Found in a complex with PTPN13 and TRIP6. Interacts (via PDZ domain) with ACTN1 and ACTN2 (via C-terminal SDL residues). Interacts (via PDZ domain) with TRIP6 (via the second LIM domain or via the third LIM domain plus C-terminus). Interacts (via LIM domain) with GRIA1 (via C-terminus); this interaction as well as the interaction with alpha-actinin is required for their colocalization in early endosomes. Interacts with PDLIM1. Forms (via LIM domain) a heterodimer with PDLIM3. Interacts directly with SRC (via kinase domain and to a lesser extent the SH2 domain). Isoform 2 interacts with NQO1. NQO1-stabilized isoform 2 heterodimerizes with isoform 1. Post-translationally, phosphorylated on tyrosine residue(s). Can be dephosphorylated by PTPN13. Found in brain.

The protein resides in the cytoplasm. It localises to the cytoskeleton. Its subcellular location is the nucleus. It is found in the perinuclear region. The protein localises to the cell projection. The protein resides in the lamellipodium. It localises to the dendritic spine. Its subcellular location is the early endosome membrane. It is found in the recycling endosome membrane. The protein localises to the synapse. The protein resides in the synaptosome. Its function is as follows. Suppresses SRC activation by recognizing and binding to active SRC and facilitating PTPN13-mediated dephosphorylation of SRC 'Tyr-419' leading to its inactivation. Inactivated SRC dissociates from this protein allowing the initiation of a new SRC inactivation cycle. Involved in reorganization of the actin cytoskeleton. In nonmuscle cells, binds to ACTN1 (alpha-actinin-1), increases the affinity of ACTN1 to F-actin (filamentous actin), and promotes formation of actin stress fibers. Involved in regulation of the synaptic AMPA receptor transport in dendritic spines of hippocampal pyramidal neurons directing the receptors toward an insertion at the postsynaptic membrane. Links endosomal surface-internalized GRIA1-containing AMPA receptors to the alpha-actinin/actin cytoskeleton. Increases AMPA receptor-mediated excitatory postsynaptic currents in neurons. In terms of biological role, involved in reorganization of the actin cytoskeleton and in regulation of cell migration. In response to oxidative stress, binds to NQO1, which stabilizes it and protects it from ubiquitin-independent degradation by the core 20S proteasome. Stabilized protein is able to heterodimerize with isoform 1 changing the subcellular location of it from cytoskeleton and nuclei to cytosol, leading to loss of isoforms 1 ability to induce formation of actin stress fibers. Counteracts the effects produced by isoform 1 on organization of actin cytoskeleton and cell motility to fine-tune actin cytoskeleton rearrangement and to attenuate cell migration. The polypeptide is PDZ and LIM domain protein 4 (PDLIM4) (Homo sapiens (Human)).